Reading from the N-terminus, the 427-residue chain is UDP-N-acetylglucosamine 1-carboxyvinyltransferase (427 aa).

Lys-24 to Asn-25 is a phosphoenolpyruvate binding site. Residue Arg-95 coordinates UDP-N-acetyl-alpha-D-glucosamine. Residue Cys-119 is the Proton donor of the active site. A 2-(S-cysteinyl)pyruvic acid O-phosphothioketal modification is found at Cys-119. Residues Arg-124 to Gln-128, Asp-308, and Val-330 each bind UDP-N-acetyl-alpha-D-glucosamine.

This sequence belongs to the EPSP synthase family. MurA subfamily.

It is found in the cytoplasm. The catalysed reaction is phosphoenolpyruvate + UDP-N-acetyl-alpha-D-glucosamine = UDP-N-acetyl-3-O-(1-carboxyvinyl)-alpha-D-glucosamine + phosphate. It participates in cell wall biogenesis; peptidoglycan biosynthesis. Cell wall formation. Adds enolpyruvyl to UDP-N-acetylglucosamine. The chain is UDP-N-acetylglucosamine 1-carboxyvinyltransferase from Deinococcus geothermalis (strain DSM 11300 / CIP 105573 / AG-3a).